The following is a 253-amino-acid chain: Thiamine import ATP-binding protein ThiQ (253 aa).

In terms of domain architecture, ABC transporter spans 8-236; the sequence is VRLDKVSFSY…AGPEAFRRYI (229 aa). Residue 38-45 participates in ATP binding; sequence GPSGSGKS.

The protein belongs to the ABC transporter superfamily. Thiamine importer (TC 3.A.1.19.1) family. The complex is composed of two ATP-binding proteins (ThiQ), two transmembrane proteins (ThiP) and a solute-binding protein (ThiB).

It localises to the cell inner membrane. It catalyses the reaction thiamine(out) + ATP + H2O = thiamine(in) + ADP + phosphate + H(+). Functionally, part of the ABC transporter complex ThiBPQ involved in thiamine import. Responsible for energy coupling to the transport system. The chain is Thiamine import ATP-binding protein ThiQ from Mesorhizobium japonicum (strain LMG 29417 / CECT 9101 / MAFF 303099) (Mesorhizobium loti (strain MAFF 303099)).